A 256-amino-acid polypeptide reads, in one-letter code: Acetyl-coenzyme A carboxylase carboxyl transferase subunit alpha (256 aa).

One can recognise a CoA carboxyltransferase C-terminal domain in the interval 1-236 (MSDVARILKE…KTAIVDELAE (236 aa)).

The protein belongs to the AccA family. In terms of assembly, acetyl-CoA carboxylase is a heterohexamer composed of biotin carboxyl carrier protein (AccB), biotin carboxylase (AccC) and two subunits each of ACCase subunit alpha (AccA) and ACCase subunit beta (AccD).

It is found in the cytoplasm. It catalyses the reaction N(6)-carboxybiotinyl-L-lysyl-[protein] + acetyl-CoA = N(6)-biotinyl-L-lysyl-[protein] + malonyl-CoA. The protein operates within lipid metabolism; malonyl-CoA biosynthesis; malonyl-CoA from acetyl-CoA: step 1/1. In terms of biological role, component of the acetyl coenzyme A carboxylase (ACC) complex. First, biotin carboxylase catalyzes the carboxylation of biotin on its carrier protein (BCCP) and then the CO(2) group is transferred by the carboxyltransferase to acetyl-CoA to form malonyl-CoA. This chain is Acetyl-coenzyme A carboxylase carboxyl transferase subunit alpha, found in Streptococcus thermophilus (strain ATCC BAA-250 / LMG 18311).